An 809-amino-acid chain; its full sequence is Trimethylamine-N-oxide reductase 2 (809 aa).

The tat-type signal signal peptide spans 1-31 (MTLTRREFIKHSGIAAGTLVVTSAAPLPAWA). Ser-176 serves as a coordination point for Mo-bis(molybdopterin guanine dinucleotide).

It belongs to the prokaryotic molybdopterin-containing oxidoreductase family. The cofactor is Mo-bis(molybdopterin guanine dinucleotide). In terms of processing, predicted to be exported by the Tat system. The position of the signal peptide cleavage has not been experimentally proven.

The protein resides in the periplasm. The enzyme catalyses trimethylamine + 2 Fe(III)-[cytochrome c] + H2O = trimethylamine N-oxide + 2 Fe(II)-[cytochrome c] + 3 H(+). Functionally, reduces trimethylamine-N-oxide (TMAO) into trimethylamine; an anaerobic reaction coupled to energy-yielding reactions. Can also reduce other N- and S-oxide compounds such as 4-methylmorpholine-N-oxide and biotin sulfoxide (BSO), but with a lower catalytic efficiency. This is Trimethylamine-N-oxide reductase 2 (torZ) from Escherichia coli O6:H1 (strain CFT073 / ATCC 700928 / UPEC).